Reading from the N-terminus, the 508-residue chain is Steroid 17-alpha-hydroxylase/17,20 lyase (508 aa).

Cys-442 serves as a coordination point for heme.

This sequence belongs to the cytochrome P450 family. Heme is required as a cofactor.

Its subcellular location is the endoplasmic reticulum membrane. The protein resides in the microsome membrane. It catalyses the reaction a C21-steroid + reduced [NADPH--hemoprotein reductase] + O2 = a 17alpha-hydroxy-C21-steroid + oxidized [NADPH--hemoprotein reductase] + H2O + H(+). The enzyme catalyses progesterone + reduced [NADPH--hemoprotein reductase] + O2 = 17alpha-hydroxyprogesterone + oxidized [NADPH--hemoprotein reductase] + H2O + H(+). The catalysed reaction is pregnenolone + reduced [NADPH--hemoprotein reductase] + O2 = 17alpha-hydroxypregnenolone + oxidized [NADPH--hemoprotein reductase] + H2O + H(+). It carries out the reaction 17alpha-hydroxyprogesterone + reduced [NADPH--hemoprotein reductase] + O2 = androst-4-ene-3,17-dione + acetate + oxidized [NADPH--hemoprotein reductase] + H2O + 2 H(+). It catalyses the reaction 17alpha-hydroxyprogesterone + reduced [NADPH--hemoprotein reductase] + O2 = 16alpha,17alpha-dihydroxyprogesterone + oxidized [NADPH--hemoprotein reductase] + H2O + H(+). The enzyme catalyses 16alpha,17alpha-dihydroxyprogesterone + reduced [NADPH--hemoprotein reductase] + O2 = 6beta,16alpha,17alpha-trihydroxyprogesterone + oxidized [NADPH--hemoprotein reductase] + H2O + H(+). The catalysed reaction is 17alpha-hydroxypregnenolone + reduced [NADPH--hemoprotein reductase] + O2 = 3beta-hydroxyandrost-5-en-17-one + acetate + oxidized [NADPH--hemoprotein reductase] + H2O + 2 H(+). It carries out the reaction 16alpha,17alpha-dihydroxypregnenolone + reduced [NADPH--hemoprotein reductase] + O2 = 3beta,16alpha-dihydroxy-androst-5-en-17-one + acetate + oxidized [NADPH--hemoprotein reductase] + H2O + 2 H(+). It catalyses the reaction 3beta-hydroxyandrost-5-en-17-one + reduced [NADPH--hemoprotein reductase] + O2 = 3beta,16alpha-dihydroxy-androst-5-en-17-one + oxidized [NADPH--hemoprotein reductase] + H2O + H(+). The enzyme catalyses androst-4-ene-3,17-dione + reduced [NADPH--hemoprotein reductase] + O2 = 16alpha-hydroxyandrost-4-ene-3,17-dione + oxidized [NADPH--hemoprotein reductase] + H2O + H(+). It participates in steroid hormone biosynthesis. The protein operates within steroid biosynthesis; glucocorticoid biosynthesis. Regulated predominantly by intracellular cAMP levels. The 17,20-lyase activity is stimulated by cytochrome b5, which acts as an allosteric effector increasing the Vmax of the lyase activity. In terms of biological role, a cytochrome P450 monooxygenase involved in corticoid and androgen biosynthesis. Catalyzes 17-alpha hydroxylation of C21 steroids, which is common for both pathways. A second oxidative step, required only for androgen synthesis, involves an acyl-carbon cleavage. The 17-alpha hydroxy intermediates, as part of adrenal glucocorticoids biosynthesis pathway, are precursors of cortisol. Hydroxylates steroid hormones, pregnenolone and progesterone to form 17-alpha hydroxy metabolites, followed by the cleavage of the C17-C20 bond to form C19 steroids, dehydroepiandrosterone (DHEA) and androstenedione. Has 16-alpha hydroxylase activity. Catalyzes 16-alpha hydroxylation of 17-alpha hydroxy pregnenolone, followed by the cleavage of the C17-C20 bond to form 16-alpha-hydroxy DHEA. Also 16-alpha hydroxylates androgens, relevant for estriol synthesis. Mechanistically, uses molecular oxygen inserting one oxygen atom into a substrate, and reducing the second into a water molecule, with two electrons provided by NADPH via cytochrome P450 reductase (CPR; NADPH-ferrihemoprotein reductase). This chain is Steroid 17-alpha-hydroxylase/17,20 lyase (CYP17A1), found in Equus caballus (Horse).